Reading from the N-terminus, the 232-residue chain is MNRYKFNDIENRLGVYFNNPSLIKTALTHSSFGNQFKDAKYNERLEFLGDSVLQLCITEYLFNKFKDKSEGELTKIRSLIVCENSLYEIAKKLSLGEYIRMSKGEELTGGRERMSIQADAVEAVIAAVYLDKGIGFVNDFILLHFEEMINKAINNEIVLDFKTKLQELLQKDGEILIQYELVKYEGPPHRRKFFTNVIINEKVMGIGEGYSKKEAEQNAAKEALKRLEKNYE.

In terms of domain architecture, RNase III spans 6-133 (FNDIENRLGV…VIAAVYLDKG (128 aa)). Position 46 (Glu-46) interacts with Mg(2+). Asp-50 is a catalytic residue. Residues Asp-119 and Glu-122 each coordinate Mg(2+). Glu-122 is an active-site residue. In terms of domain architecture, DRBM spans 160-229 (DFKTKLQELL…AKEALKRLEK (70 aa)).

It belongs to the ribonuclease III family. In terms of assembly, homodimer. It depends on Mg(2+) as a cofactor.

It is found in the cytoplasm. It catalyses the reaction Endonucleolytic cleavage to 5'-phosphomonoester.. In terms of biological role, digests double-stranded RNA. Involved in the processing of primary rRNA transcript to yield the immediate precursors to the large and small rRNAs (23S and 16S). Processes some mRNAs, and tRNAs when they are encoded in the rRNA operon. Processes pre-crRNA and tracrRNA of type II CRISPR loci if present in the organism. The sequence is that of Ribonuclease 3 from Clostridium botulinum (strain Eklund 17B / Type B).